The chain runs to 302 residues: tRNA pseudouridine synthase B (302 aa).

Asp-45 (nucleophile) is an active-site residue.

It belongs to the pseudouridine synthase TruB family. Type 1 subfamily.

The catalysed reaction is uridine(55) in tRNA = pseudouridine(55) in tRNA. Its function is as follows. Responsible for synthesis of pseudouridine from uracil-55 in the psi GC loop of transfer RNAs. This Francisella tularensis subsp. tularensis (strain FSC 198) protein is tRNA pseudouridine synthase B.